The sequence spans 475 residues: Squamosa promoter-binding-like protein 12 (475 aa).

The tract at residues 49–73 (NHGSTNSSGGTFTSSSELANGSSKS) is disordered. A compositionally biased stretch (low complexity) spans 51 to 73 (GSTNSSGGTFTSSSELANGSSKS). The segment at 177–254 (SSYCQVEGCK…SDHNARRRKP (78 aa)) adopts an SBP-type zinc-finger fold. Positions 180, 185, 202, 205, 221, 224, 228, and 240 each coordinate Zn(2+). The short motif at 237–253 (KKSCRRRLSDHNARRRK) is the Bipartite nuclear localization signal element. The disordered stretch occupies residues 437–475 (GGGGFWQDGDDPPPLDHASQAQAFMHPGNGSSSGYGHLH). A compositionally biased stretch (polar residues) spans 465-475 (NGSSSGYGHLH).

Expressed in young panicles.

The protein localises to the nucleus. In terms of biological role, trans-acting factor that binds specifically to the consensus nucleotide sequence 5'-TNCGTACAA-3'. May be involved in panicle development. This is Squamosa promoter-binding-like protein 12 (SPL12) from Oryza sativa subsp. indica (Rice).